Consider the following 550-residue polypeptide: Hydroxylamine reductase (550 aa).

4 residues coordinate [2Fe-2S] cluster: Cys3, Cys6, Cys18, and Cys25. Hybrid [4Fe-2O-2S] cluster is bound by residues His249, Glu273, Cys317, Cys405, Cys433, Cys458, Glu492, and Lys494. Residue Cys405 is modified to Cysteine persulfide.

The protein belongs to the HCP family. [2Fe-2S] cluster is required as a cofactor. It depends on hybrid [4Fe-2O-2S] cluster as a cofactor.

Its subcellular location is the cytoplasm. The enzyme catalyses A + NH4(+) + H2O = hydroxylamine + AH2 + H(+). Its function is as follows. Catalyzes the reduction of hydroxylamine to form NH(3) and H(2)O. In Salmonella agona (strain SL483), this protein is Hydroxylamine reductase.